The chain runs to 185 residues: Transcription termination/antitermination protein NusG (185 aa).

The 29-residue stretch at 134–162 (PGQMVRVIDGPFNDFDGLVEEVNYEKNRL) folds into the KOW domain.

The protein belongs to the NusG family.

Functionally, participates in transcription elongation, termination and antitermination. The protein is Transcription termination/antitermination protein NusG of Xylella fastidiosa (strain 9a5c).